A 245-amino-acid polypeptide reads, in one-letter code: 14-3-3 protein zeta/delta (245 aa).

Methionine 1 is subject to N-acetylmethionine. Lysine 3 is modified (N6-acetyllysine). Position 58 is a phosphoserine; by PKA (serine 58). Lysine 68 carries the post-translational modification N6-acetyllysine. Phosphoserine occurs at positions 184, 207, and 210. The residue at position 232 (threonine 232) is a Phosphothreonine; by CK1.

The protein belongs to the 14-3-3 family. As to quaternary structure, homodimer. Heterodimerizes with YWHAE. Homo- and heterodimerization is inhibited by phosphorylation on Ser-58. Interacts with FOXO4, NOXA1, SSH1 ARHGEF2, CDK16 and BSPRY. Interacts with WEE1 (C-terminal). Interacts with MLF1 (phosphorylated form); the interaction retains it in the cytoplasm. Interacts with BAX; the interaction occurs in the cytoplasm. Under stress conditions, MAPK8-mediated phosphorylation releases BAX to mitochondria. Interacts with TP53; the interaction enhances p53 transcriptional activity. The Ser-58 phosphorylated form inhibits this interaction and p53 transcriptional activity. Interacts with ABL1 (phosphorylated form); the interaction retains ABL1 in the cytoplasm. Interacts with PKA-phosphorylated AANAT; the interaction modulates AANAT enzymatic activity by increasing affinity for arylalkylamines and acetyl-CoA and protecting the enzyme from dephosphorylation and proteasomal degradation. It may also prevent thiol-dependent inactivation. Interacts with AKT1; the interaction phosphorylates YWHAZ and modulates dimerization. Interacts with GAB2. Interacts with BCL2L11, SAMSN1 and TLK2. Interacts with phosphorylated RAF1; the interaction is inhibited when YWHAZ is phosphorylated on Thr-232. Interacts with Thr-phosphorylated ITGB2. Interacts with the 'Thr-369' phosphorylated form of DAPK2. Interacts with PI4KB, TBC1D22A and TBC1D22B. Interacts with ZFP36L1 (via phosphorylated form); this interaction occurs in a p38 MAPK- and AKT-signaling pathways. Interacts with SLITRK1. Interacts with AK5, LDB1, MADD, MARK3, PDE1A and SMARCB1. Interacts with YWHAZ. Interacts with MEFV. Interacts with ADAM22 (via C-terminus). In terms of processing, the delta, brain-specific form differs from the zeta form in being phosphorylated. Phosphorylation on Ser-184 by MAPK8; promotes dissociation of BAX and translocation of BAX to mitochondria. Phosphorylation on Thr-232; inhibits binding of RAF1. Phosphorylated on Ser-58 by PKA and protein kinase C delta type catalytic subunit in a sphingosine-dependent fashion. Phosphorylation on Ser-58 by PKA; disrupts homodimerization and heterodimerization with YHAE and TP53.

It localises to the cytoplasm. Its subcellular location is the melanosome. Adapter protein implicated in the regulation of a large spectrum of both general and specialized signaling pathways. Binds to a large number of partners, usually by recognition of a phosphoserine or phosphothreonine motif. Binding generally results in the modulation of the activity of the binding partner. Promotes cytosolic retention and inactivation of TFEB transcription factor by binding to phosphorylated TFEB. Induces ARHGEF7 activity on RAC1 as well as lamellipodia and membrane ruffle formation. In neurons, regulates spine maturation through the modulation of ARHGEF7 activity. The protein is 14-3-3 protein zeta/delta (YWHAZ) of Bos taurus (Bovine).